A 440-amino-acid polypeptide reads, in one-letter code: Phenylacetate-coenzyme A ligase (440 aa).

Belongs to the phenylacetyl-CoA ligase family. In terms of assembly, monomer.

It catalyses the reaction 2-phenylacetate + ATP + CoA = phenylacetyl-CoA + AMP + diphosphate. It functions in the pathway aromatic compound metabolism; phenylacetate degradation. With respect to regulation, inhibition of activity is observed in the presence of a 1 mM of the divalent cations zinc, copper, and nickel. Catalyzes the activation of phenylacetic acid (PA) to phenylacetyl-CoA (PA-CoA). Involved in the phenylalanine metabolism. This Aromatoleum evansii (Azoarcus evansii) protein is Phenylacetate-coenzyme A ligase (paaK).